A 447-amino-acid polypeptide reads, in one-letter code: Glutamate--tRNA ligase 1 (447 aa).

The short motif at 10 to 20 is the 'HIGH' region element; that stretch reads PSPTGMLHVGN. The 'KMSKS' region signature appears at 240–244; that stretch reads KISKR. An ATP-binding site is contributed by lysine 243.

Belongs to the class-I aminoacyl-tRNA synthetase family. Glutamate--tRNA ligase type 1 subfamily. As to quaternary structure, monomer.

The protein resides in the cytoplasm. It carries out the reaction tRNA(Glu) + L-glutamate + ATP = L-glutamyl-tRNA(Glu) + AMP + diphosphate. In terms of biological role, catalyzes the attachment of glutamate to tRNA(Glu) in a two-step reaction: glutamate is first activated by ATP to form Glu-AMP and then transferred to the acceptor end of tRNA(Glu). The chain is Glutamate--tRNA ligase 1 from Rickettsia massiliae (strain Mtu5).